A 185-amino-acid chain; its full sequence is Ribosome-recycling factor (185 aa).

The protein belongs to the RRF family.

Its subcellular location is the cytoplasm. Functionally, responsible for the release of ribosomes from messenger RNA at the termination of protein biosynthesis. May increase the efficiency of translation by recycling ribosomes from one round of translation to another. The polypeptide is Ribosome-recycling factor (Aliarcobacter butzleri (strain RM4018) (Arcobacter butzleri)).